The chain runs to 273 residues: Large ribosomal subunit protein uL2 (273 aa).

Residues 228–273 form a disordered region; that stretch reads VDHPHGGGEGKTSGGRHPVTPWGFPTKGKKTRKNKRTSKFIVKKRK. Positions 254-273 are enriched in basic residues; it reads KGKKTRKNKRTSKFIVKKRK.

Belongs to the universal ribosomal protein uL2 family. Part of the 50S ribosomal subunit. Forms a bridge to the 30S subunit in the 70S ribosome.

In terms of biological role, one of the primary rRNA binding proteins. Required for association of the 30S and 50S subunits to form the 70S ribosome, for tRNA binding and peptide bond formation. It has been suggested to have peptidyltransferase activity; this is somewhat controversial. Makes several contacts with the 16S rRNA in the 70S ribosome. The protein is Large ribosomal subunit protein uL2 of Rickettsia felis (strain ATCC VR-1525 / URRWXCal2) (Rickettsia azadi).